Reading from the N-terminus, the 44-residue chain is Mu-conotoxin-like Cal 12.1.1e (44 aa).

Cystine bridges form between C3–C16, C11–C28, C18–C33, and C27–C38. A 6'-bromotryptophan modification is found at W17. 4-hydroxyproline is present on P23. 2 positions are modified to 6'-bromotryptophan: W36 and W37. P39 is subject to 4-hydroxyproline. A 6'-bromotryptophan modification is found at W43.

In terms of tissue distribution, expressed by the venom duct.

The protein localises to the secreted. Functionally, mu-conotoxins block voltage-gated sodium channels. This toxin reversibly blocks voltage-gated sodium channel in cephalopods, with no alteration in the voltage dependence of sodium conductance or on the kinetics of inactivation. This chain is Mu-conotoxin-like Cal 12.1.1e, found in Californiconus californicus (California cone).